The sequence spans 140 residues: Small ribosomal subunit protein uS12 (140 aa).

The residue at position 102 (aspartate 102) is a 3-methylthioaspartic acid.

The protein belongs to the universal ribosomal protein uS12 family. Part of the 30S ribosomal subunit. Contacts proteins S8 and S17. May interact with IF1 in the 30S initiation complex.

In terms of biological role, with S4 and S5 plays an important role in translational accuracy. Its function is as follows. Interacts with and stabilizes bases of the 16S rRNA that are involved in tRNA selection in the A site and with the mRNA backbone. Located at the interface of the 30S and 50S subunits, it traverses the body of the 30S subunit contacting proteins on the other side and probably holding the rRNA structure together. The combined cluster of proteins S8, S12 and S17 appears to hold together the shoulder and platform of the 30S subunit. In Geobacillus sp. (strain WCH70), this protein is Small ribosomal subunit protein uS12.